The primary structure comprises 566 residues: Peroxisomal leader peptide-processing protease (566 aa).

The segment at 319–531 (ALAALLPPEV…LQPALQQYSQ (213 aa)) is serine protease. Residues histidine 372, aspartate 408, and serine 481 each act as charge relay system in the active site.

It belongs to the peptidase S1B family. In terms of assembly, homodimer. Forms a heterodimer with the C-terminal cleavage product (45 kDa form). Forms a heterodimer with the N-terminal cleavage product (15 kDa form). Interacts with PEX5. Interacts with LONP2. In terms of processing, self-cleavage gives rise to an N-terminal 15-kDa fragment and C-terminal 45-kDa fragment upon import into the peroxisomes. The full-lengh TYSND1 is the active the proteolytic processing of PTS1- and PTS2-proteins and in self-cleavage, and intermolecular self-cleavage of TYSND1 down-regulates its protease activity.

It localises to the peroxisome. Its function is as follows. Peroxisomal protease that mediates both the removal of the leader peptide from proteins containing a PTS2 target sequence and processes several PTS1-containing proteins. Catalyzes the processing of PTS1-proteins involved in the peroxisomal beta-oxidation of fatty acids. In Homo sapiens (Human), this protein is Peroxisomal leader peptide-processing protease (TYSND1).